The following is a 263-amino-acid chain: MADILTQIVQTKTEAVTAARLRVPEAELKAMAGDRDSKRPFAENLRQVHAQGGTGIIAEIKRASPSRGIIQADLDPADCAAKYEAGGAAAISVLTDAPYFKGSLSDLKQARKACSLPVLRKEFILSDYQVYESAAAGADAVLLIVRILTQTMLSDLIGLCRALGLDTLVEIHDENDLETATNAGAKLIGINNRDLKTFKTDIAVATRLVSNFGPDQVPVAASGIGSREDIERTKAAGIYNFLIGESLVRAEDTVSFLKQLLTT.

Belongs to the TrpC family.

It carries out the reaction 1-(2-carboxyphenylamino)-1-deoxy-D-ribulose 5-phosphate + H(+) = (1S,2R)-1-C-(indol-3-yl)glycerol 3-phosphate + CO2 + H2O. Its pathway is amino-acid biosynthesis; L-tryptophan biosynthesis; L-tryptophan from chorismate: step 4/5. The chain is Indole-3-glycerol phosphate synthase from Desulfosudis oleivorans (strain DSM 6200 / JCM 39069 / Hxd3) (Desulfococcus oleovorans).